Here is a 229-residue protein sequence, read N- to C-terminus: MSFEISVEEIEELIETGNLNIDHALKELGATSQSSLNKPPSQSSRTEGNDGGTKISRNPAPVEAPAHTSTAQRSHNEENESGRQNLDSLSMISNKPQTGTLLMGSDTQLPSPSKTYQGLILDAKKRALNEPRRDQKITNEHGSMNDTRIFKRGEYRYQERGLGYTESEIKNTTPTPRHRREYSISWVNGRTTISEWCNPCCAPVKSTASVEKCTCGRCPKICELCIRDP.

Polar residues-rich tracts occupy residues 30 to 46 (ATSQSSLNKPPSQSSRT) and 82 to 112 (GRQNLDSLSMISNKPQTGTLLMGSDTQLPSP). The tract at residues 30-112 (ATSQSSLNKP…MGSDTQLPSP (83 aa)) is disordered. Residues His178, Cys197, Cys201, Cys213, Cys215, Cys218, Cys222, and Cys225 each contribute to the Zn(2+) site.

The protein belongs to the paramyxoviruses V protein family.

Functionally, blocks host interferon signaling. In Homo sapiens (Human), this protein is Non-structural protein V (P/V).